The following is a 387-amino-acid chain: Protein phosphatase 2C 50 (387 aa).

The region spanning 60 to 377 (VWGCASTRGR…DNITVIVVDL (318 aa)) is the PPM-type phosphatase domain. Positions 118 and 119 each coordinate Mn(2+). Residues 264–268 (VSGIL) carry the Modulates binding affinity to PYR/PYL/RCAR abscisic acid intracellular receptors motif. Positions 306 and 368 each coordinate Mn(2+).

Belongs to the PP2C family. As to quaternary structure, interacts with PYL3, PYL5, PYL9 and PYL10. Binding to PYL3, PYL5, PYL9 and PYL10 is dependent on the presence of abscisic acid (ABA). Interacts with SAPK10. Mg(2+) serves as cofactor. The cofactor is Mn(2+).

It carries out the reaction O-phospho-L-seryl-[protein] + H2O = L-seryl-[protein] + phosphate. It catalyses the reaction O-phospho-L-threonyl-[protein] + H2O = L-threonyl-[protein] + phosphate. In terms of biological role, protein phosphatase involved in abscisic acid (ABA) signaling. Together with PYL3 and SAPK10, may form an ABA signaling module involved in stress response. The protein is Protein phosphatase 2C 50 of Oryza sativa subsp. japonica (Rice).